Reading from the N-terminus, the 417-residue chain is Imidazolonepropionase (417 aa).

Residues histidine 80 and histidine 82 each coordinate Fe(3+). Zn(2+) contacts are provided by histidine 80 and histidine 82. The 4-imidazolone-5-propanoate site is built by arginine 89, tyrosine 152, and histidine 187. An N-formimidoyl-L-glutamate-binding site is contributed by tyrosine 152. Histidine 252 is a Fe(3+) binding site. Histidine 252 serves as a coordination point for Zn(2+). A 4-imidazolone-5-propanoate-binding site is contributed by glutamate 255. Fe(3+) is bound at residue aspartate 326. Aspartate 326 contributes to the Zn(2+) binding site. The N-formimidoyl-L-glutamate site is built by asparagine 328 and glycine 330. Serine 331 contributes to the 4-imidazolone-5-propanoate binding site.

It belongs to the metallo-dependent hydrolases superfamily. HutI family. Zn(2+) is required as a cofactor. The cofactor is Fe(3+).

The protein localises to the cytoplasm. The enzyme catalyses 4-imidazolone-5-propanoate + H2O = N-formimidoyl-L-glutamate. It participates in amino-acid degradation; L-histidine degradation into L-glutamate; N-formimidoyl-L-glutamate from L-histidine: step 3/3. In terms of biological role, catalyzes the hydrolytic cleavage of the carbon-nitrogen bond in imidazolone-5-propanoate to yield N-formimidoyl-L-glutamate. It is the third step in the universal histidine degradation pathway. The sequence is that of Imidazolonepropionase from Bacteroides thetaiotaomicron (strain ATCC 29148 / DSM 2079 / JCM 5827 / CCUG 10774 / NCTC 10582 / VPI-5482 / E50).